Here is a 433-residue protein sequence, read N- to C-terminus: Serine hydroxymethyltransferase (433 aa).

Residues Leu-133 and 137-139 contribute to the (6S)-5,6,7,8-tetrahydrofolate site; that span reads GHL. The residue at position 242 (Lys-242) is an N6-(pyridoxal phosphate)lysine. 366–368 is a (6S)-5,6,7,8-tetrahydrofolate binding site; the sequence is SPF.

The protein belongs to the SHMT family. As to quaternary structure, homodimer. Pyridoxal 5'-phosphate is required as a cofactor.

The protein localises to the cytoplasm. It carries out the reaction (6R)-5,10-methylene-5,6,7,8-tetrahydrofolate + glycine + H2O = (6S)-5,6,7,8-tetrahydrofolate + L-serine. It functions in the pathway one-carbon metabolism; tetrahydrofolate interconversion. It participates in amino-acid biosynthesis; glycine biosynthesis; glycine from L-serine: step 1/1. Catalyzes the reversible interconversion of serine and glycine with tetrahydrofolate (THF) serving as the one-carbon carrier. This reaction serves as the major source of one-carbon groups required for the biosynthesis of purines, thymidylate, methionine, and other important biomolecules. Also exhibits THF-independent aldolase activity toward beta-hydroxyamino acids, producing glycine and aldehydes, via a retro-aldol mechanism. This Beijerinckia indica subsp. indica (strain ATCC 9039 / DSM 1715 / NCIMB 8712) protein is Serine hydroxymethyltransferase.